The chain runs to 698 residues: Protein CRAC (698 aa).

The PH domain maps to aspartate 22–arginine 122. Residues threonine 594 to histidine 630 form a disordered region. Over residues serine 601–threonine 626 the composition is skewed to low complexity.

It is found in the cytoplasm. Its function is as follows. Couples activated G protein to adenylyl cyclase signal transduction from surface cAMP receptor. Pianissimo a cytosolic regulator and CRAC, are both essential for activation of the enzyme adenylyl cyclase. Pianissimo and CRAC do not function redundantly. Both proteins are integral components of the adenylyl cyclase activation pathway. This Dictyostelium discoideum (Social amoeba) protein is Protein CRAC (dagA).